A 137-amino-acid polypeptide reads, in one-letter code: Large ribosomal subunit protein uL16 (137 aa).

This sequence belongs to the universal ribosomal protein uL16 family. As to quaternary structure, part of the 50S ribosomal subunit.

Binds 23S rRNA and is also seen to make contacts with the A and possibly P site tRNAs. The polypeptide is Large ribosomal subunit protein uL16 (Solidesulfovibrio magneticus (strain ATCC 700980 / DSM 13731 / RS-1) (Desulfovibrio magneticus)).